We begin with the raw amino-acid sequence, 262 residues long: Tryptophan synthase alpha chain (262 aa).

Active-site proton acceptor residues include Glu-48 and Asp-59.

It belongs to the TrpA family. As to quaternary structure, tetramer of two alpha and two beta chains.

The enzyme catalyses (1S,2R)-1-C-(indol-3-yl)glycerol 3-phosphate + L-serine = D-glyceraldehyde 3-phosphate + L-tryptophan + H2O. The protein operates within amino-acid biosynthesis; L-tryptophan biosynthesis; L-tryptophan from chorismate: step 5/5. In terms of biological role, the alpha subunit is responsible for the aldol cleavage of indoleglycerol phosphate to indole and glyceraldehyde 3-phosphate. This chain is Tryptophan synthase alpha chain, found in Helicobacter pylori (strain ATCC 700392 / 26695) (Campylobacter pylori).